The sequence spans 99 residues: Transmembrane protein 14A (99 aa).

Transmembrane regions (helical) follow at residues 1-21, 24-44, and 79-99; these read MDLIGFGYAALVTFGSILGYK, GGVPSLIAGLFVGFLAGYGAY, and PAGLVAGLSLLMILRLVLLLL.

It belongs to the TMEM14 family.

The protein resides in the mitochondrion membrane. It is found in the endoplasmic reticulum membrane. Functionally, inhibits apoptosis via negative regulation of the mitochondrial outer membrane permeabilization involved in apoptotic signaling pathway. The chain is Transmembrane protein 14A (TMEM14A) from Sus scrofa (Pig).